We begin with the raw amino-acid sequence, 441 residues long: Cysteine--tRNA ligase (441 aa).

A Zn(2+)-binding site is contributed by C24. The 'HIGH' region signature appears at P26–N36. Zn(2+) is bound by residues C204, H230, and E234. Residues K262 to S266 carry the 'KMSKS' region motif. K265 lines the ATP pocket.

The protein belongs to the class-I aminoacyl-tRNA synthetase family. In terms of assembly, monomer. Zn(2+) is required as a cofactor.

Its subcellular location is the cytoplasm. It catalyses the reaction tRNA(Cys) + L-cysteine + ATP = L-cysteinyl-tRNA(Cys) + AMP + diphosphate. The protein is Cysteine--tRNA ligase of Mycoplasma mycoides subsp. mycoides SC (strain CCUG 32753 / NCTC 10114 / PG1).